We begin with the raw amino-acid sequence, 875 residues long: Serine/threonine-protein kinase D2 (875 aa).

Low complexity predominate over residues 1–12 (MAAAPSHPAGLP). Residues 1-35 (MAAAPSHPAGLPGSPGPGSPPPPGGLDLQSPPPLL) form a disordered region. A compositionally biased stretch (pro residues) spans 14-35 (SPGPGSPPPPGGLDLQSPPPLL). Phosphoserine is present on serine 30. Residue tyrosine 87 is modified to Phosphotyrosine. A Phorbol-ester/DAG-type 1 zinc finger spans residues 138–188 (PHALTVHSYRAPAFCDHCGEMLFGLVRQGLKCDGCGLNYHKRCAFSIPNNC). Residues serine 197, serine 198, serine 200, serine 203, serine 206, serine 211, serine 212, and serine 214 each carry the phosphoserine modification. The disordered stretch occupies residues 224–247 (RSTTDLLPRRPPSSSSSSSSSSFY). The span at 236-245 (SSSSSSSSSS) shows a compositional bias: low complexity. Position 244 is a phosphoserine; by CSNK1D and CSNK1E (serine 244). The residue at position 245 (serine 245) is a Phosphoserine. Residues 265–315 (PHTFLIHSYTRPTVCQACKKLLKGLFRQGLQCKDCKFNCHKRCATRVPNDC) form a Phorbol-ester/DAG-type 2 zinc finger. The tract at residues 332–374 (DYSEADKSSISDELEDSGVIPGSHSESALHASEEEEGEGHKAQ) is disordered. Residues 398–510 (TTLREGWVVH…WETAIRQALM (113 aa)) form the PH domain. Tyrosine 408 carries the phosphotyrosine modification. Tyrosine 439 carries the phosphotyrosine; by ABL1 modification. Residue serine 519 is modified to Phosphoserine. A Protein kinase domain is found at 552–808 (IFPDEVLGSG…VDKSLSHPWL (257 aa)). ATP-binding positions include 558–566 (LGSGQFGVV) and lysine 581. The active-site Proton acceptor is the aspartate 675. Position 707 is a phosphoserine; by PKC (serine 707). Residue serine 711 is modified to Phosphoserine; by autocatalysis. The residue at position 718 (tyrosine 718) is a Phosphotyrosine; by ABL1. The Important for ABL1-mediated Tyr-718 phosphorylation motif lies at 725–727 (LNQ). Phosphoserine; by autocatalysis is present on serine 873.

The protein belongs to the protein kinase superfamily. CAMK Ser/Thr protein kinase family. PKD subfamily. Interacts (via C-terminus) with LCK. Interacts (via N-terminus and zing-finger domain 1 and 2) with PRKCD in response to oxidative stress; the interaction is independent of PRKD2 tyrosine phosphorylation. Mg(2+) is required as a cofactor. Phosphorylation of Ser-873 correlates with the activation status of the kinase. Ser-707 is probably phosphorylated by PKC. Phosphorylation at Ser-244 by CSNK1D and CSNK1E promotes nuclear localization and substrate targeting. Phosphorylation at Ser-244, Ser-707 and Ser-711 is required for nuclear localization. Phosphorylated at Tyr-438 by ABL1 in response to oxidative stress. Phosphorylated at Tyr-718 by ABL1 specifically in response to oxidative stress; requires prior phosphorylation at Ser-707 or/and Ser-711.

It is found in the cytoplasm. It localises to the cell membrane. The protein localises to the golgi apparatus. The protein resides in the trans-Golgi network. The enzyme catalyses L-seryl-[protein] + ATP = O-phospho-L-seryl-[protein] + ADP + H(+). It carries out the reaction L-threonyl-[protein] + ATP = O-phospho-L-threonyl-[protein] + ADP + H(+). Activated by DAG and phorbol esters. Phorbol-ester/DAG-type domains bind DAG, mediating translocation to membranes. Autophosphorylation of Ser-711 and phosphorylation of Ser-707 by PKC relieves auto-inhibition by the PH domain. Catalytic activity is further increased by phosphorylation at Tyr-718 in response to oxidative stress. Its function is as follows. Serine/threonine-protein kinase that converts transient diacylglycerol (DAG) signals into prolonged physiological effects downstream of PKC, and is involved in the regulation of cell proliferation via MAPK1/3 (ERK1/2) signaling, oxidative stress-induced NF-kappa-B activation, inhibition of HDAC7 transcriptional repression, signaling downstream of T-cell antigen receptor (TCR) and cytokine production, and plays a role in Golgi membrane trafficking, angiogenesis, secretory granule release and cell adhesion. May potentiate mitogenesis induced by the neuropeptide bombesin by mediating an increase in the duration of MAPK1/3 (ERK1/2) signaling, which leads to accumulation of immediate-early gene products including FOS that stimulate cell cycle progression. In response to oxidative stress, is phosphorylated at Tyr-438 and Tyr-718 by ABL1, which leads to the activation of PRKD2 without increasing its catalytic activity, and mediates activation of NF-kappa-B. In response to the activation of the gastrin receptor CCKBR, is phosphorylated at Ser-244 by CSNK1D and CSNK1E, translocates to the nucleus, phosphorylates HDAC7, leading to nuclear export of HDAC7 and inhibition of HDAC7 transcriptional repression of NR4A1/NUR77. Upon TCR stimulation, is activated independently of ZAP70, translocates from the cytoplasm to the nucleus and is required for interleukin-2 (IL2) promoter up-regulation. During adaptive immune responses, is required in peripheral T-lymphocytes for the production of the effector cytokines IL2 and IFNG after TCR engagement and for optimal induction of antibody responses to antigens. In epithelial cells stimulated with lysophosphatidic acid (LPA), is activated through a PKC-dependent pathway and mediates LPA-stimulated interleukin-8 (IL8) secretion via a NF-kappa-B-dependent pathway. During TCR-induced T-cell activation, interacts with and is activated by the tyrosine kinase LCK, which results in the activation of the NFAT transcription factors. In the trans-Golgi network (TGN), regulates the fission of transport vesicles that are on their way to the plasma membrane and in polarized cells is involved in the transport of proteins from the TGN to the basolateral membrane. Plays an important role in endothelial cell proliferation and migration prior to angiogenesis, partly through modulation of the expression of KDR/VEGFR2 and FGFR1, two key growth factor receptors involved in angiogenesis. In secretory pathway, is required for the release of chromogranin-A (CHGA)-containing secretory granules from the TGN. Downstream of PRKCA, plays important roles in angiotensin-2-induced monocyte adhesion to endothelial cells. The polypeptide is Serine/threonine-protein kinase D2 (Prkd2) (Mus musculus (Mouse)).